The chain runs to 233 residues: Biosynthetic peptidoglycan transglycosylase (233 aa).

The helical transmembrane segment at 8 to 28 (LIALPVGIFIFFNAYVYGNII) threads the bilayer.

It belongs to the glycosyltransferase 51 family.

It is found in the cell inner membrane. The enzyme catalyses [GlcNAc-(1-&gt;4)-Mur2Ac(oyl-L-Ala-gamma-D-Glu-L-Lys-D-Ala-D-Ala)](n)-di-trans,octa-cis-undecaprenyl diphosphate + beta-D-GlcNAc-(1-&gt;4)-Mur2Ac(oyl-L-Ala-gamma-D-Glu-L-Lys-D-Ala-D-Ala)-di-trans,octa-cis-undecaprenyl diphosphate = [GlcNAc-(1-&gt;4)-Mur2Ac(oyl-L-Ala-gamma-D-Glu-L-Lys-D-Ala-D-Ala)](n+1)-di-trans,octa-cis-undecaprenyl diphosphate + di-trans,octa-cis-undecaprenyl diphosphate + H(+). Its pathway is cell wall biogenesis; peptidoglycan biosynthesis. Peptidoglycan polymerase that catalyzes glycan chain elongation from lipid-linked precursors. In Neisseria meningitidis serogroup C (strain 053442), this protein is Biosynthetic peptidoglycan transglycosylase.